The following is a 430-amino-acid chain: Anaerobic glycerol-3-phosphate dehydrogenase subunit B (430 aa).

This sequence belongs to the anaerobic G-3-P dehydrogenase subunit B family. As to quaternary structure, composed of a catalytic GlpA/B dimer and of membrane bound GlpC. FMN is required as a cofactor.

The catalysed reaction is a quinone + sn-glycerol 3-phosphate = dihydroxyacetone phosphate + a quinol. Its pathway is polyol metabolism; glycerol degradation via glycerol kinase pathway; glycerone phosphate from sn-glycerol 3-phosphate (anaerobic route): step 1/1. Functionally, conversion of glycerol 3-phosphate to dihydroxyacetone. Uses fumarate or nitrate as electron acceptor. This is Anaerobic glycerol-3-phosphate dehydrogenase subunit B from Actinobacillus succinogenes (strain ATCC 55618 / DSM 22257 / CCUG 43843 / 130Z).